The chain runs to 100 residues: Non-histone chromosomal protein HMG-14 (100 aa).

The interval Met-1–Asp-100 is disordered. Ser-7 is subject to ADP-ribosylserine. Position 8 is a phosphoserine (Ser-8). Lys-14 is subject to N6-acetyllysine. Ser-21 is subject to Phosphoserine; by RPS6KA5. ADP-ribosylserine; alternate is present on Ser-25. Ser-25 is modified (phosphoserine; alternate; by RPS6KA5). Lys-27 is modified (N6-acetyllysine). Basic and acidic residues-rich tracts occupy residues Ala-30–Val-50 and Glu-69–Glu-85. Residue Thr-81 is modified to Phosphothreonine. Position 82 is an N6-acetyllysine (Lys-82). Residues Ser-86, Ser-89, and Ser-99 each carry the phosphoserine modification.

In terms of assembly, interacts with transcriptional regulator SEHBP. Phosphorylation on Ser-21 and Ser-25 weakens binding to nucleosomes and increases the rate of H3 phosphorylation. Phosphorylation favors cytoplasmic localization.

The protein localises to the nucleus. It localises to the cytoplasm. Binds to the inner side of the nucleosomal DNA thus altering the interaction between the DNA and the histone octamer. May be involved in the process which maintains transcribable genes in a unique chromatin conformation. Inhibits the phosphorylation of nucleosomal histones H3 and H2A by RPS6KA5/MSK1 and RPS6KA3/RSK2. This Homo sapiens (Human) protein is Non-histone chromosomal protein HMG-14 (HMGN1).